Consider the following 247-residue polypeptide: E3 ubiquitin ligase TRIM40 (247 aa).

The RING-type zinc finger occupies C12–R55. The B box-type zinc finger occupies G64–I105. 4 residues coordinate Zn(2+): C69, H72, C91, and H97. Positions H111–W148 form a coiled coil.

It belongs to the TRIM/RBCC family. Interacts with NEDD8.

It carries out the reaction S-ubiquitinyl-[E2 ubiquitin-conjugating enzyme]-L-cysteine + [acceptor protein]-L-lysine = [E2 ubiquitin-conjugating enzyme]-L-cysteine + N(6)-ubiquitinyl-[acceptor protein]-L-lysine.. Functionally, E3 ubiquitin-protein ligase that plays a role in the limitation of the innate immune response. Mediates inhibition of the RLR signaling pathway by ubiquitinating RIGI and IFIH1 receptors, leading to their proteasomal degradation. Also promotes the neddylation of IKBKG/NEMO, stabilizing NFKBIA, and thereby inhibiting of NF-kappa-B nuclear translocation and activation. This chain is E3 ubiquitin ligase TRIM40 (Trim40), found in Rattus norvegicus (Rat).